A 265-amino-acid polypeptide reads, in one-letter code: 4-hydroxy-tetrahydrodipicolinate reductase (265 aa).

Residues 7 to 12 (GASGRM), Asp33, 96 to 98 (GTT), and 120 to 123 (AANM) contribute to the NAD(+) site. The Proton donor/acceptor role is filled by His153. Position 154 (His154) interacts with (S)-2,3,4,5-tetrahydrodipicolinate. Lys157 serves as the catalytic Proton donor. 163–164 (GT) contacts (S)-2,3,4,5-tetrahydrodipicolinate.

It belongs to the DapB family.

The protein localises to the cytoplasm. It carries out the reaction (S)-2,3,4,5-tetrahydrodipicolinate + NAD(+) + H2O = (2S,4S)-4-hydroxy-2,3,4,5-tetrahydrodipicolinate + NADH + H(+). The enzyme catalyses (S)-2,3,4,5-tetrahydrodipicolinate + NADP(+) + H2O = (2S,4S)-4-hydroxy-2,3,4,5-tetrahydrodipicolinate + NADPH + H(+). It participates in amino-acid biosynthesis; L-lysine biosynthesis via DAP pathway; (S)-tetrahydrodipicolinate from L-aspartate: step 4/4. Functionally, catalyzes the conversion of 4-hydroxy-tetrahydrodipicolinate (HTPA) to tetrahydrodipicolinate. This Cupriavidus metallidurans (strain ATCC 43123 / DSM 2839 / NBRC 102507 / CH34) (Ralstonia metallidurans) protein is 4-hydroxy-tetrahydrodipicolinate reductase.